A 359-amino-acid chain; its full sequence is 3-dehydroquinate synthase (359 aa).

NAD(+) contacts are provided by residues 72–77 (EGEIHK), 106–110 (GVIGD), 130–131 (TS), Lys143, Lys152, and 170–173 (CLKT). Glu185, His248, and His264 together coordinate Zn(2+).

This sequence belongs to the sugar phosphate cyclases superfamily. Dehydroquinate synthase family. It depends on Co(2+) as a cofactor. Requires Zn(2+) as cofactor. NAD(+) is required as a cofactor.

It localises to the cytoplasm. It carries out the reaction 7-phospho-2-dehydro-3-deoxy-D-arabino-heptonate = 3-dehydroquinate + phosphate. It participates in metabolic intermediate biosynthesis; chorismate biosynthesis; chorismate from D-erythrose 4-phosphate and phosphoenolpyruvate: step 2/7. Its function is as follows. Catalyzes the conversion of 3-deoxy-D-arabino-heptulosonate 7-phosphate (DAHP) to dehydroquinate (DHQ). In Dehalococcoides mccartyi (strain ATCC BAA-2266 / KCTC 15142 / 195) (Dehalococcoides ethenogenes (strain 195)), this protein is 3-dehydroquinate synthase.